A 490-amino-acid polypeptide reads, in one-letter code: ATP synthase subunit beta, chloroplastic (490 aa).

170 to 177 (GGXGVGKT) contacts ATP.

It belongs to the ATPase alpha/beta chains family. In terms of assembly, F-type ATPases have 2 components, CF(1) - the catalytic core - and CF(0) - the membrane proton channel. CF(1) has five subunits: alpha(3), beta(3), gamma(1), delta(1), epsilon(1). CF(0) has four main subunits: a(1), b(1), b'(1) and c(9-12).

The protein localises to the plastid. It localises to the chloroplast thylakoid membrane. The catalysed reaction is ATP + H2O + 4 H(+)(in) = ADP + phosphate + 5 H(+)(out). Produces ATP from ADP in the presence of a proton gradient across the membrane. The catalytic sites are hosted primarily by the beta subunits. This chain is ATP synthase subunit beta, chloroplastic, found in Ipomoea coccinea (Scarlet morning-glory).